The chain runs to 446 residues: ATP synthase subunit b-delta (446 aa).

Positions 1–168 are ATP synthase subunit b; that stretch reads MSTFIGQLVG…PKGADVEYPL (168 aa). Residues 4-24 form a helical membrane-spanning segment; sequence FIGQLVGFAAIVYLVWWYVVP. The ATP synthase subunit delta stretch occupies residues 169–446; that stretch reads LAKMRSASRR…LVAAEAALPD (278 aa).

The protein in the N-terminal section; belongs to the ATPase B chain family. In the C-terminal section; belongs to the ATPase delta chain family. As to quaternary structure, F-type ATPases have 2 components, F(1) - the catalytic core - and F(0) - the membrane proton channel. F(1) has five subunits: alpha(3), beta(3), gamma(1), delta(1), epsilon(1). F(0) has three main subunits: a(1), b(2) and c(10-14). The alpha and beta chains form an alternating ring which encloses part of the gamma chain. F(1) is attached to F(0) by a central stalk formed by the gamma and epsilon chains, while a peripheral stalk is formed by the delta and b chains.

It is found in the cell membrane. In terms of biological role, f(1)F(0) ATP synthase produces ATP from ADP in the presence of a proton or sodium gradient. F-type ATPases consist of two structural domains, F(1) containing the extramembraneous catalytic core and F(0) containing the membrane proton channel, linked together by a central stalk and a peripheral stalk. During catalysis, ATP synthesis in the catalytic domain of F(1) is coupled via a rotary mechanism of the central stalk subunits to proton translocation. Functionally, this fusion protein includes a component of the F(0) channel (subunit b) and of the F(1) subunit (subunit delta). Two copies of subunit b and one of delta together form the peripheral 'stator' stalk which links F(1) to F(0). The chain is ATP synthase subunit b-delta (atpFH) from Mycobacterium leprae (strain Br4923).